Consider the following 379-residue polypeptide: Mannitol-1-phosphate 5-dehydrogenase (379 aa).

3–14 (ALHFGAGNIGRG) is an NAD(+) binding site.

This sequence belongs to the mannitol dehydrogenase family.

The enzyme catalyses D-mannitol 1-phosphate + NAD(+) = beta-D-fructose 6-phosphate + NADH + H(+). In Bacillus licheniformis (strain ATCC 14580 / DSM 13 / JCM 2505 / CCUG 7422 / NBRC 12200 / NCIMB 9375 / NCTC 10341 / NRRL NRS-1264 / Gibson 46), this protein is Mannitol-1-phosphate 5-dehydrogenase.